Here is a 287-residue protein sequence, read N- to C-terminus: Formamidopyrimidine-DNA glycosylase (287 aa).

The active-site Schiff-base intermediate with DNA is Pro2. Glu3 acts as the Proton donor in catalysis. Lys61 (proton donor; for beta-elimination activity) is an active-site residue. Residues His95, Arg115, and Arg157 each coordinate DNA. The FPG-type zinc-finger motif lies at 243 to 277 (NVYGRADQPCRRCGTPVRREAFMNRSSYSCPRCQP). Residue Arg267 is the Proton donor; for delta-elimination activity of the active site.

This sequence belongs to the FPG family. In terms of assembly, monomer. It depends on Zn(2+) as a cofactor.

It carries out the reaction Hydrolysis of DNA containing ring-opened 7-methylguanine residues, releasing 2,6-diamino-4-hydroxy-5-(N-methyl)formamidopyrimidine.. The catalysed reaction is 2'-deoxyribonucleotide-(2'-deoxyribose 5'-phosphate)-2'-deoxyribonucleotide-DNA = a 3'-end 2'-deoxyribonucleotide-(2,3-dehydro-2,3-deoxyribose 5'-phosphate)-DNA + a 5'-end 5'-phospho-2'-deoxyribonucleoside-DNA + H(+). In terms of biological role, involved in base excision repair of DNA damaged by oxidation or by mutagenic agents. Acts as a DNA glycosylase that recognizes and removes damaged bases. Has a preference for oxidized purines, such as 7,8-dihydro-8-oxoguanine (8-oxoG). Has AP (apurinic/apyrimidinic) lyase activity and introduces nicks in the DNA strand. Cleaves the DNA backbone by beta-delta elimination to generate a single-strand break at the site of the removed base with both 3'- and 5'-phosphates. The chain is Formamidopyrimidine-DNA glycosylase from Salinispora arenicola (strain CNS-205).